A 1054-amino-acid polypeptide reads, in one-letter code: Bifunctional cytochrome P450/NADPH--P450 reductase 2 (1054 aa).

The segment at 1–475 (MKQASAIPQP…QADIKAETKP (475 aa)) is cytochrome P450. C403 contacts heme. The span at 462-480 (QRKEQADIKAETKPKETKP) shows a compositional bias: basic and acidic residues. The segment at 462 to 482 (QRKEQADIKAETKPKETKPKH) is disordered. Residues 476 to 1053 (KETKPKHGTP…RRYVKDVWTG (578 aa)) form an NADPH--P450 reductase region. A Flavodoxin-like domain is found at 486–625 (LLVLFGSNLG…HRESWENRFW (140 aa)). Residues 492-497 (SNLGTA), 539-542 (SYNG), 573-575 (CGN), and 581-583 (TYQ) contribute to the FMN site. The FAD-binding FR-type domain maps to 663–896 (YGAFEGIVLE…RTPQSGFQMP (234 aa)).

This sequence in the N-terminal section; belongs to the cytochrome P450 family. FAD is required as a cofactor. FMN serves as cofactor. Requires heme b as cofactor.

The protein resides in the cytoplasm. The enzyme catalyses an organic molecule + reduced [NADPH--hemoprotein reductase] + O2 = an alcohol + oxidized [NADPH--hemoprotein reductase] + H2O + H(+). It carries out the reaction 2 oxidized [cytochrome P450] + NADPH = 2 reduced [cytochrome P450] + NADP(+) + H(+). Functionally, functions as a fatty acid monooxygenase. Catalyzes hydroxylation of a range of medium to long-chain fatty acids, with a preference for long-chain unsaturated and branched-chain fatty acids over saturated fatty acids. Hydroxylation of myristic acid occurs mainly at the omega-2 and omega-3 positions, in approximately equal proportions. Also displays a NADPH-dependent reductase activity in the C-terminal domain, which allows electron transfer from NADPH to the heme iron of the cytochrome P450 N-terminal domain. This Bacillus subtilis (strain 168) protein is Bifunctional cytochrome P450/NADPH--P450 reductase 2.